Here is a 506-residue protein sequence, read N- to C-terminus: Maturase K (506 aa).

The protein belongs to the intron maturase 2 family. MatK subfamily.

It localises to the plastid. The protein localises to the chloroplast. Functionally, usually encoded in the trnK tRNA gene intron. Probably assists in splicing its own and other chloroplast group II introns. This Cytisus scoparius (Scotch broom) protein is Maturase K.